The chain runs to 162 residues: Tegument protein BLRF2 (162 aa).

Residues 12-43 (VKAVDMSMEDMAARLARLESENKALKQQVLRG) are a coiled coil. A disordered region spans residues 121–162 (GAKGQPSPGEGTRLRESNDPNATRRARSRSRGREAKKVQISD). The segment covering 151–162 (RGREAKKVQISD) has biased composition (basic and acidic residues).

This sequence belongs to the herpesviridae BLRF2 family. As to quaternary structure, homooligomer; homooligomerizes and binds double-stranded DNA (dsDNA) cooperatively. Interacts with host CGAS.

The protein resides in the virion tegument. It is found in the host cytoplasm. Plays a role in the inhibition of host innate immune system by targeting the CGAS enzymatic activity which is the principal cytosolic DNA sensor that detects invading viral DNA. Acts by inhibiting CGAS-DNA phase separation: directly binds double-stranded DNA (dsDNA) in a length dependent but sequence independent manner and is able to form DNA-induced phase separation in infected cells. DNA phase separation of ORF52 mediates disruption of liquid-like droplets in which CGAS is activated, thereby preventing CGAS activity. The polypeptide is Tegument protein BLRF2 (Epstein-Barr virus (strain GD1) (HHV-4)).